The primary structure comprises 348 residues: Histidinol-phosphate aminotransferase (348 aa).

The residue at position 210 (Lys210) is an N6-(pyridoxal phosphate)lysine.

It belongs to the class-II pyridoxal-phosphate-dependent aminotransferase family. Histidinol-phosphate aminotransferase subfamily. Homodimer. It depends on pyridoxal 5'-phosphate as a cofactor.

It carries out the reaction L-histidinol phosphate + 2-oxoglutarate = 3-(imidazol-4-yl)-2-oxopropyl phosphate + L-glutamate. The protein operates within amino-acid biosynthesis; L-histidine biosynthesis; L-histidine from 5-phospho-alpha-D-ribose 1-diphosphate: step 7/9. The sequence is that of Histidinol-phosphate aminotransferase from Pseudomonas putida (strain ATCC 47054 / DSM 6125 / CFBP 8728 / NCIMB 11950 / KT2440).